Here is a 282-residue protein sequence, read N- to C-terminus: MRLDVVTIFPEYLEPLRHALLGKAIEQGILSVGVHNLRAWTNDVHQSVDSTPCGGGPGMVMKPEVWGPALDDVAAGTGPAATVSDLESSAEHKRNLRPATTNGDAEPLGEKAGGVTKPLLIVPTPAGKPFTQDMAERWSTEEHVVFACGRYEGIDQRVVEDAHNRYRVEEVSIGDYVLIGGEVAVLVMAEAMVRLIPGVLGNQASHQEDSFQDGLLEGPSYTRPRQWRGLDVPDVLFSGNHAKIAQWRREQSLARTKKIRPDLLDSVELSKADRAYLDGLEL.

The segment at 77–114 is disordered; the sequence is TGPAATVSDLESSAEHKRNLRPATTNGDAEPLGEKAGG. S-adenosyl-L-methionine-binding positions include glycine 149 and 173–178; that span reads IGDYVL.

It belongs to the RNA methyltransferase TrmD family. In terms of assembly, homodimer.

It localises to the cytoplasm. The catalysed reaction is guanosine(37) in tRNA + S-adenosyl-L-methionine = N(1)-methylguanosine(37) in tRNA + S-adenosyl-L-homocysteine + H(+). Its function is as follows. Specifically methylates guanosine-37 in various tRNAs. The chain is tRNA (guanine-N(1)-)-methyltransferase from Corynebacterium jeikeium (strain K411).